The chain runs to 104 residues: Pterin-4-alpha-carbinolamine dehydratase (104 aa).

Alanine 2 bears the N-acetylalanine mark. Substrate-binding positions include 61–63 and 78–81; these read DHH and STHD.

It belongs to the pterin-4-alpha-carbinolamine dehydratase family. Homotetramer and homodimer.

The protein resides in the cytoplasm. It localises to the nucleus. It carries out the reaction (4aS,6R)-4a-hydroxy-L-erythro-5,6,7,8-tetrahydrobiopterin = (6R)-L-erythro-6,7-dihydrobiopterin + H2O. Its function is as follows. Involved in tetrahydrobiopterin biosynthesis. Seems to both prevent the formation of 7-pterins and accelerate the formation of quinonoid-BH2. Coactivator for HNF1A-dependent transcription. Regulates the dimerization of homeodomain protein HNF1A and enhances its transcriptional activity. Also acts as a coactivator for HNF1B-dependent transcription. This chain is Pterin-4-alpha-carbinolamine dehydratase (pcbd), found in Xenopus laevis (African clawed frog).